The following is a 247-amino-acid chain: uncharacterized protein (247 aa).

4 to 28 (ALVTGGSRGIGRATALLLAQEGYTV) is a binding site for NADP(+). Position 142 (Ser-142) interacts with substrate. Tyr-156 (proton acceptor) is an active-site residue.

The protein belongs to the short-chain dehydrogenases/reductases (SDR) family.

This is an uncharacterized protein from Escherichia coli (strain K12).